Reading from the N-terminus, the 232-residue chain is Chalcone synthase (232 aa).

Residue Cys7 is part of the active site.

This sequence belongs to the thiolase-like superfamily. Chalcone/stilbene synthases family.

The catalysed reaction is (E)-4-coumaroyl-CoA + 3 malonyl-CoA + 3 H(+) = 2',4,4',6'-tetrahydroxychalcone + 3 CO2 + 4 CoA. Its pathway is secondary metabolite biosynthesis; flavonoid biosynthesis. In terms of biological role, the primary product of this enzyme is 4,2',4',6'-tetrahydroxychalcone (also termed naringenin-chalcone or chalcone) which can under specific conditions spontaneously isomerize into naringenin. This Malus domestica (Apple) protein is Chalcone synthase (CHS).